A 223-amino-acid polypeptide reads, in one-letter code: Small ribosomal subunit protein uS3 (223 aa).

Residues isoleucine 39–lysine 115 enclose the KH type-2 domain.

The protein belongs to the universal ribosomal protein uS3 family. Part of the 30S ribosomal subunit. Forms a tight complex with proteins S10 and S14.

In terms of biological role, binds the lower part of the 30S subunit head. Binds mRNA in the 70S ribosome, positioning it for translation. This is Small ribosomal subunit protein uS3 from Leuconostoc mesenteroides subsp. mesenteroides (strain ATCC 8293 / DSM 20343 / BCRC 11652 / CCM 1803 / JCM 6124 / NCDO 523 / NBRC 100496 / NCIMB 8023 / NCTC 12954 / NRRL B-1118 / 37Y).